The sequence spans 475 residues: UDP-N-acetylmuramate--L-alanine ligase (475 aa).

Position 125-131 (125-131) interacts with ATP; that stretch reads GTHGKTT.

It belongs to the MurCDEF family.

The protein resides in the cytoplasm. It catalyses the reaction UDP-N-acetyl-alpha-D-muramate + L-alanine + ATP = UDP-N-acetyl-alpha-D-muramoyl-L-alanine + ADP + phosphate + H(+). It functions in the pathway cell wall biogenesis; peptidoglycan biosynthesis. Cell wall formation. This chain is UDP-N-acetylmuramate--L-alanine ligase, found in Glaesserella parasuis serovar 5 (strain SH0165) (Haemophilus parasuis).